Here is a 463-residue protein sequence, read N- to C-terminus: Fumarate hydratase class II (463 aa).

Substrate-binding positions include 97 to 99 (SGT), 128 to 131 (HPND), 138 to 140 (SSN), and Thr-186. His-187 acts as the Proton donor/acceptor in catalysis. Ser-317 is a catalytic residue. Residues Ser-318 and 323–325 (KVN) contribute to the substrate site.

This sequence belongs to the class-II fumarase/aspartase family. Fumarase subfamily. Homotetramer.

It localises to the cytoplasm. The catalysed reaction is (S)-malate = fumarate + H2O. It functions in the pathway carbohydrate metabolism; tricarboxylic acid cycle; (S)-malate from fumarate: step 1/1. Its function is as follows. Involved in the TCA cycle. Catalyzes the stereospecific interconversion of fumarate to L-malate. The chain is Fumarate hydratase class II from Helicobacter pylori (strain ATCC 700392 / 26695) (Campylobacter pylori).